Here is a 298-residue protein sequence, read N- to C-terminus: Glycine--tRNA ligase alpha subunit (298 aa).

Belongs to the class-II aminoacyl-tRNA synthetase family. As to quaternary structure, tetramer of two alpha and two beta subunits.

It is found in the cytoplasm. It catalyses the reaction tRNA(Gly) + glycine + ATP = glycyl-tRNA(Gly) + AMP + diphosphate. The chain is Glycine--tRNA ligase alpha subunit from Helicobacter hepaticus (strain ATCC 51449 / 3B1).